A 152-amino-acid chain; its full sequence is Adrenodoxin-like protein 2, mitochondrial (152 aa).

A mitochondrion-targeting transit peptide spans 1–29; it reads MLVINSCRAASRLALRSLNLRSPIATRTF. The 106-residue stretch at 41 to 146 folds into the 2Fe-2S ferredoxin-type domain; it reads VNITFVRANG…GLEVHVPSTI (106 aa). Positions 80, 86, 89, and 127 each coordinate [2Fe-2S] cluster.

This sequence belongs to the adrenodoxin/putidaredoxin family. [2Fe-2S] cluster serves as cofactor.

It localises to the mitochondrion. Required for ecdysteroidogenesis in the prothoracic gland which is necessary for larval to pupal transition. This Drosophila melanogaster (Fruit fly) protein is Adrenodoxin-like protein 2, mitochondrial.